A 276-amino-acid polypeptide reads, in one-letter code: uncharacterized protein (276 aa).

The propeptide at 1–4 is leader sequence; that stretch reads MNRG. An N-methylmethionine modification is found at methionine 5. A helical transmembrane segment spans residues 5 to 26; the sequence is MTLIELLVALALSIILSLGLYY.

Its subcellular location is the membrane. This is an uncharacterized protein from Aquifex aeolicus (strain VF5).